Here is a 121-residue protein sequence, read N- to C-terminus: Small ribosomal subunit protein bS16 (121 aa).

The interval 80 to 121 (AGVREKTERNNPNKAKPGKKAQERAEEKAAKAAEAAEAADAE) is disordered. Basic and acidic residues-rich tracts occupy residues 81-90 (GVREKTERNN) and 99-110 (KAQERAEEKAAK).

This sequence belongs to the bacterial ribosomal protein bS16 family.

This Ruegeria sp. (strain TM1040) (Silicibacter sp.) protein is Small ribosomal subunit protein bS16.